The following is a 123-amino-acid chain: Snaclec echicetin subunit beta (123 aa).

Residues 1–121 (NCLPDWSVYE…SGEFYFVCKC (121 aa)) enclose the C-type lectin domain. 3 disulfide bridges follow: cysteine 2–cysteine 13, cysteine 30–cysteine 119, and cysteine 96–cysteine 111.

The protein belongs to the snaclec family. Heterodimer of subunits alpha and beta; disulfide-linked. Forms an active complex with the pentameric immunoglobuline Mkappa (IgMkappa). Expressed by the venom gland.

The protein resides in the secreted. Functionally, echicetin itself inhibits aggregation of washed platelets induced by vWF, thrombin or alboaggregin-A. However, when complexed with the pentameric plasma immunoglobulin Mkappa (IgMkappa), echicetin binds specifically to GPIb and activates platelets. This is caused by P-selectin expression and activation of alpha-IIb/beta-3 as well as tyrosine phosphorylation of several signal transduction molecules, including p53/56(LYN), p64, p72(SYK), p70 to p90, and p120. In vivo, it induces thrombocytopenia when injected into mice, probably accounting of activation of platelets rather than inhibition. The chain is Snaclec echicetin subunit beta from Echis carinatus sochureki (Saw-scaled viper).